Consider the following 374-residue polypeptide: MSFNKLKFGATIGIIGGGQLGKMMAQSAQKMGYKVVVLDPSEDCPCRYVAHEFIQAKYDDEKALNQLGQKCDVITYEFENISAQQLKLLCEKYNIPQGYQAIQLLQDRLTEKETLKSAGTKVVPFISVKESTDIDKAIETLGYPFIVKTRFGGYDGKGQVLINNEKDLQEGFKLIETSECVAEKYLNIKKEVSLTVTRGNNNQITFFPLQENEHRNQILFKTIVPARIDKTAEAKEQVNKIIQSIHFIGTFTVEFFIDSNNQLYVNEIAPRPHNSGHYSIEACDYSQFDTHILAVTGQSLPNSIELLKPAVMMNLLGKDLDLLENEFNEHPEWHLHIYGKSERKDSRKMGHMTVLTNDVNQTEQDMYAKFEGSN.

Residues Arg108, Lys148, Gly153 to Gln159, Glu183 to Leu186, Glu191, His214, and Asn266 to Glu267 each bind ATP. One can recognise an ATP-grasp domain in the interval Lys112–Thr296.

This sequence belongs to the PurK/PurT family. Homodimer.

It carries out the reaction 5-amino-1-(5-phospho-beta-D-ribosyl)imidazole + hydrogencarbonate + ATP = 5-carboxyamino-1-(5-phospho-D-ribosyl)imidazole + ADP + phosphate + 2 H(+). It functions in the pathway purine metabolism; IMP biosynthesis via de novo pathway; 5-amino-1-(5-phospho-D-ribosyl)imidazole-4-carboxylate from 5-amino-1-(5-phospho-D-ribosyl)imidazole (N5-CAIR route): step 1/2. Its function is as follows. Catalyzes the ATP-dependent conversion of 5-aminoimidazole ribonucleotide (AIR) and HCO(3)(-) to N5-carboxyaminoimidazole ribonucleotide (N5-CAIR). This chain is N5-carboxyaminoimidazole ribonucleotide synthase, found in Staphylococcus aureus (strain MSSA476).